The following is a 130-amino-acid chain: Small ribosomal subunit protein uS11 (130 aa).

It belongs to the universal ribosomal protein uS11 family. In terms of assembly, part of the 30S ribosomal subunit. Interacts with proteins S7 and S18. Binds to IF-3.

Its function is as follows. Located on the platform of the 30S subunit, it bridges several disparate RNA helices of the 16S rRNA. Forms part of the Shine-Dalgarno cleft in the 70S ribosome. The chain is Small ribosomal subunit protein uS11 from Campylobacter fetus subsp. fetus (strain 82-40).